A 253-amino-acid polypeptide reads, in one-letter code: MADETTMRAGRGPGRACGRVSGVRILVVEDEPKMTALLARALTEEGHTVDTVADGRHAVAAVDGGDYDAVVLDVMLPGIDGFEVCARLRRQRVWTPVLMLTARGAVTDRIAGLDGGADDYLTKPFNLDELFARLRALSRRGPIPRPPTLEAGDLRLDPSEHRVWRADTEIRLSHKEFTLLEALIRRPGIVHTRAQLLERCWDAAYEARSNIVDVYIRYLRDKIDRPFGVTSLETIRGAGYRLRKDGGRHALPR.

The region spanning 24–138 is the Response regulatory domain; sequence RILVVEDEPK…ELFARLRALS (115 aa). 4-aspartylphosphate is present on aspartate 73. The ompR/PhoB-type DNA-binding region spans 146-244; it reads PPTLEAGDLR…IRGAGYRLRK (99 aa).

Interacts with HK2. Post-translationally, phosphorylated by HK2.

Its subcellular location is the cytoplasm. Member of the three-protein two-component system HK1/HK2/TcrA. This Mycobacterium tuberculosis (strain ATCC 25618 / H37Rv) protein is Transcriptional regulatory protein TcrA (tcrA).